The sequence spans 137 residues: MEDKRVAMLVVMMLVMGNMLIEAEAVMSFKLCYGGCLVACALIAPPIKKLFCPFLCIKDCKRRPMLSFEANLNEIDQTGSYCELGCATDRCVSSSSIDDKGYYVNFSGIMWRKFHYAWIHAQKSAPTRTKIAIDFSL.

A signal peptide spans 1–23 (MEDKRVAMLVVMMLVMGNMLIEA).

It belongs to the plant thionin (TC 1.C.44) family. Post-translationally, is disulfide-linked.

It is found in the secreted. Functionally, may be involved in plant defense. This Arabidopsis thaliana (Mouse-ear cress) protein is Thionin-like protein 1.